We begin with the raw amino-acid sequence, 897 residues long: High molecular weight rhoptry protein 3 (897 aa).

An N-terminal signal peptide occupies residues 1-24 (MRSKHLVTLFIITFLSFSTVKVWG). Cystine bridges form between cysteine 157–cysteine 231, cysteine 244–cysteine 253, cysteine 262–cysteine 276, cysteine 421–cysteine 620, and cysteine 475–cysteine 536. The helical transmembrane segment at 597-615 (FVLYFISIISVLYINEYYY) threads the bilayer. Disordered regions lie at residues 788–845 (KEQS…SNLK) and 859–897 (QLDKEKPKKKKSKRKKKRDSSSDRILLEESKTFTSENEL). Residues 792–801 (KSTSAASTSD) show a composition bias toward polar residues. The span at 802–817 (EISGSEGPSTESTSTG) shows a compositional bias: low complexity. The residue at position 804 (serine 804) is a Phosphoserine; by CDPK1. Positions 820-832 (GEDKTTDNTYKEM) are enriched in basic and acidic residues. Positions 865 to 876 (PKKKKSKRKKKR) are enriched in basic residues. Over residues 877 to 889 (DSSSDRILLEESK) the composition is skewed to basic and acidic residues.

Component of the RhopH complex. RhopH complex is composed of CLAG3.1/CLAG3.2, RhopH2 and RhopH3 with a 1:1:1 subunit stoichiometry. Interacts with CLAG3.1/CLAG3.2. Interacts with CDPK1; the interaction promotes RhopH3 phosphorylation in merozoites. Post-translationally, proteolytically cleaved near C-terminus.

It localises to the host cell membrane. It is found in the parasitophorous vacuole membrane. The protein resides in the cytoplasm. Its subcellular location is the cytoplasmic vesicle. The protein localises to the secretory vesicle. It localises to the rhoptry. Its function is as follows. Participates in the formation of new permeability pathways in Plasmodium-infected erythrocytes enabling the uptake of nutrients from the blood plasma. Required for maintaining invasion capacity of merozoites. Required for the trophozoite to schizont developmental transition of the intracellular parasite. The chain is High molecular weight rhoptry protein 3 from Plasmodium falciparum (isolate 3D7).